The primary structure comprises 337 residues: Probable RuBisCO transcriptional regulator (337 aa).

One can recognise an HTH lysR-type domain in the interval 6-63 (FTLDQLRILKAIAVEGSFKRAADSLYVSQPAVSLQVQNLERQLDVPLFDRGGRRAQLT). A DNA-binding region (H-T-H motif) is located at residues 23-42 (FKRAADSLYVSQPAVSLQVQ).

Belongs to the LysR transcriptional regulatory family.

Trans-acting transcriptional regulator of RuBisCO genes (rbcL and rbcS) expression. This chain is Probable RuBisCO transcriptional regulator (rbcR), found in Trichormus variabilis (strain ATCC 29413 / PCC 7937) (Anabaena variabilis).